The primary structure comprises 95 residues: Transcription and mRNA export factor ENY2-2 (95 aa).

This sequence belongs to the ENY2 family. Component of the nuclear pore complex (NPC)-associated TREX-2 complex (transcription and export complex 2). Component of the SAGA transcription coactivator-HAT complex. Within the SAGA complex, participates in a subcomplex of SAGA called the DUB module (deubiquitination module).

It localises to the nucleus. It is found in the nucleoplasm. Functionally, involved in mRNA export coupled transcription activation by association with both the TREX-2 and the SAGA complexes. The transcription regulatory histone acetylation (HAT) complex SAGA is a multiprotein complex that activates transcription by remodeling chromatin and mediating histone acetylation and deubiquitination. Within the SAGA complex, participates in a subcomplex that specifically deubiquitinates histones. The SAGA complex is recruited to specific gene promoters by activators, where it is required for transcription. The TREX-2 complex functions in docking export-competent ribonucleoprotein particles (mRNPs) to the nuclear entrance of the nuclear pore complex (nuclear basket). TREX-2 participates in mRNA export and accurate chromatin positioning in the nucleus by tethering genes to the nuclear periphery. This Salmo salar (Atlantic salmon) protein is Transcription and mRNA export factor ENY2-2 (eny2-2).